The following is a 453-amino-acid chain: Ankyrin repeat and SOCS box protein 16 (453 aa).

7 ANK repeats span residues C56–M85, K110–A139, G142–V171, E175–L204, S209–L238, Q242–A279, and K283–V312. An SOCS box domain is found at Y398–G450.

This sequence belongs to the ankyrin SOCS box (ASB) family.

The protein operates within protein modification; protein ubiquitination. In terms of biological role, may be a substrate-recognition component of a SCF-like ECS (Elongin-Cullin-SOCS-box protein) E3 ubiquitin-protein ligase complex which mediates the ubiquitination and subsequent proteasomal degradation of target proteins. In Homo sapiens (Human), this protein is Ankyrin repeat and SOCS box protein 16 (ASB16).